Reading from the N-terminus, the 365-residue chain is Putative ankyrin repeat protein R903 (365 aa).

10 ANK repeats span residues 38 to 67, 68 to 97, 99 to 127, 129 to 158, 184 to 213, 214 to 243, 245 to 273, 275 to 298, 299 to 328, and 330 to 361; these read NINS…DIRF, QNNE…DIFI, NNFC…KFSN, SKPI…NINK, KFKD…GNIT, VSNN…RFPR, SNEL…SIVD, LLNI…LKNV, NLQK…NPDE, and RTYL…KLQS.

The sequence is that of Putative ankyrin repeat protein R903 from Acanthamoeba polyphaga mimivirus (APMV).